A 403-amino-acid polypeptide reads, in one-letter code: Probable tRNA sulfurtransferase (403 aa).

Positions Q60–T165 constitute a THUMP domain. Residues M183–L184, H208–F209, R265, G287, and Q296 each bind ATP.

The protein belongs to the ThiI family.

It localises to the cytoplasm. It carries out the reaction [ThiI sulfur-carrier protein]-S-sulfanyl-L-cysteine + a uridine in tRNA + 2 reduced [2Fe-2S]-[ferredoxin] + ATP + H(+) = [ThiI sulfur-carrier protein]-L-cysteine + a 4-thiouridine in tRNA + 2 oxidized [2Fe-2S]-[ferredoxin] + AMP + diphosphate. It catalyses the reaction [ThiS sulfur-carrier protein]-C-terminal Gly-Gly-AMP + S-sulfanyl-L-cysteinyl-[cysteine desulfurase] + AH2 = [ThiS sulfur-carrier protein]-C-terminal-Gly-aminoethanethioate + L-cysteinyl-[cysteine desulfurase] + A + AMP + 2 H(+). It functions in the pathway cofactor biosynthesis; thiamine diphosphate biosynthesis. In terms of biological role, catalyzes the ATP-dependent transfer of a sulfur to tRNA to produce 4-thiouridine in position 8 of tRNAs, which functions as a near-UV photosensor. Also catalyzes the transfer of sulfur to the sulfur carrier protein ThiS, forming ThiS-thiocarboxylate. This is a step in the synthesis of thiazole, in the thiamine biosynthesis pathway. The sulfur is donated as persulfide by IscS. The sequence is that of Probable tRNA sulfurtransferase from Listeria innocua serovar 6a (strain ATCC BAA-680 / CLIP 11262).